We begin with the raw amino-acid sequence, 787 residues long: Protocadherin beta-15 (787 aa).

A signal peptide spans 1–26 (MEPAGERFPEQRQVLILLLLLEVTLA). Residues 27–690 (GWEPRRYSVM…AQADSLTVYL (664 aa)) lie on the Extracellular side of the membrane. 5 Cadherin domains span residues 35–133 (VMEE…SPEF), 138–242 (MTLK…APEF), 247–347 (YEVQ…FPEL), 352–451 (LTSP…APAF), and 456–561 (YTLF…SPFV). A glycan (N-linked (GlcNAc...) asparagine) is linked at N418. An N-linked (GlcNAc...) asparagine glycan is attached at N567. One can recognise a Cadherin 6 domain in the interval 568-671 (GSAPCTELVP…LVDGFSQPYL (104 aa)). A helical transmembrane segment spans residues 691 to 711 (VVALASVSSLFLFSVFLFVAV). The Cytoplasmic portion of the chain corresponds to 712-787 (RLCRRSRAAS…DSRRKSEFLE (76 aa)).

It is found in the cell membrane. Functionally, potential calcium-dependent cell-adhesion protein. May be involved in the establishment and maintenance of specific neuronal connections in the brain. The sequence is that of Protocadherin beta-15 (PCDHB15) from Homo sapiens (Human).